We begin with the raw amino-acid sequence, 404 residues long: RING-H2 finger protein ATL11 (404 aa).

Residues 1–36 (MNPKGRTNLNRSIIGGHDHGSILQLLLFLLLLSSHG) form the signal peptide. The chain crosses the membrane as a helical span at residues 64-84 (AILMIVLVSVFFFLGFFSVYI). The RING-type; atypical zinc finger occupies 144 to 186 (CSVCLNEFEDDETLRLIPKCCHVFHPGCIDAWLRSHTTCPLCR). 2 disordered regions span residues 339–361 (PYRT…VRAS) and 385–404 (VGEN…SNTV).

This sequence belongs to the RING-type zinc finger family. ATL subfamily.

The protein resides in the membrane. The enzyme catalyses S-ubiquitinyl-[E2 ubiquitin-conjugating enzyme]-L-cysteine + [acceptor protein]-L-lysine = [E2 ubiquitin-conjugating enzyme]-L-cysteine + N(6)-ubiquitinyl-[acceptor protein]-L-lysine.. It participates in protein modification; protein ubiquitination. This Arabidopsis thaliana (Mouse-ear cress) protein is RING-H2 finger protein ATL11 (ATL11).